The sequence spans 156 residues: Large ribosomal subunit protein uL30 (156 aa).

It belongs to the universal ribosomal protein uL30 family. In terms of assembly, part of the 50S ribosomal subunit.

The polypeptide is Large ribosomal subunit protein uL30 (Thermofilum pendens (strain DSM 2475 / Hrk 5)).